A 306-amino-acid chain; its full sequence is Pantothenate kinase (306 aa).

91–98 (GSVAVGKS) contributes to the ATP binding site.

The protein belongs to the prokaryotic pantothenate kinase family.

It localises to the cytoplasm. It carries out the reaction (R)-pantothenate + ATP = (R)-4'-phosphopantothenate + ADP + H(+). It functions in the pathway cofactor biosynthesis; coenzyme A biosynthesis; CoA from (R)-pantothenate: step 1/5. In Streptococcus pyogenes serotype M5 (strain Manfredo), this protein is Pantothenate kinase.